The sequence spans 396 residues: L-lactate dehydrogenase (396 aa).

The 380-residue stretch at Met1–Ser380 folds into the FMN hydroxy acid dehydrogenase domain. Tyr24 lines the substrate pocket. Ser106 and Gln127 together coordinate FMN. Tyr129 contacts substrate. Residue Thr155 coordinates FMN. Residue Arg164 participates in substrate binding. An FMN-binding site is contributed by Lys251. His275 serves as the catalytic Proton acceptor. Substrate is bound at residue Arg278. Asp306–Arg330 contributes to the FMN binding site.

This sequence belongs to the FMN-dependent alpha-hydroxy acid dehydrogenase family. The cofactor is FMN.

The protein resides in the cell inner membrane. The enzyme catalyses (S)-lactate + A = pyruvate + AH2. Catalyzes the conversion of L-lactate to pyruvate. Is coupled to the respiratory chain. This is L-lactate dehydrogenase from Escherichia coli (strain SMS-3-5 / SECEC).